Consider the following 1431-residue polypeptide: Zinc finger protein 687b (1431 aa).

2 disordered regions span residues K24–K481 and K504–G538. Low complexity predominate over residues S61–S73. Residues G103–G122 are compositionally biased toward polar residues. Composition is skewed to low complexity over residues M174–L188, A196–P209, and L217–P248. The span at L249–A267 shows a compositional bias: polar residues. Over residues S311–P324 the composition is skewed to low complexity. A compositionally biased stretch (polar residues) spans R342 to S359. Residues P361–P377 are compositionally biased toward basic and acidic residues. Low complexity predominate over residues P385–A410. Residues D438–V449 are compositionally biased toward basic and acidic residues. Residues Q519 to K528 show a composition bias toward gly residues. The C2H2-type 1; degenerate zinc finger occupies Y674–H692. Residues T754 to P816 form a disordered region. Over residues L760–P775 the composition is skewed to low complexity. Residues A781–S802 are compositionally biased toward polar residues. Residues F830 to R853 form a C2H2-type 2; degenerate zinc finger. 4 consecutive C2H2-type zinc fingers follow at residues Y919–H942, H947–H970, Y982–H1004, and F1013–H1036. The tract at residues V1041–M1120 is disordered. The segment covering A1043–A1057 has biased composition (low complexity). Polar residues predominate over residues G1058–L1075. The span at G1080–Q1111 shows a compositional bias: acidic residues. The C2H2-type 7 zinc finger occupies W1122–H1145. A C2H2-type 8; degenerate zinc finger spans residues W1205–R1227. The interval R1225 to T1310 is disordered. 2 consecutive C2H2-type zinc fingers follow at residues F1307–H1329 and Q1337–H1360. A disordered region spans residues L1362–D1392. The segment covering P1373–S1384 has biased composition (polar residues). Residues V1395 to H1425 form a C2H2-type 11 zinc finger.

This sequence belongs to the krueppel C2H2-type zinc-finger protein family. In terms of tissue distribution, widely expressed with highest levels in eye, spleen and ovary.

It localises to the nucleus. May be involved in transcriptional regulation. This Danio rerio (Zebrafish) protein is Zinc finger protein 687b (znf687b).